We begin with the raw amino-acid sequence, 386 residues long: Succinate--CoA ligase [ADP-forming] subunit beta (386 aa).

Residues Lys46, 53–55, Glu99, Gln102, and Glu107 contribute to the ATP site; that span reads GRG. Residues Asn199 and Asp213 each contribute to the Mg(2+) site. Residues Asn264 and 321–323 contribute to the substrate site; that span reads GIV.

This sequence belongs to the succinate/malate CoA ligase beta subunit family. As to quaternary structure, heterotetramer of two alpha and two beta subunits. It depends on Mg(2+) as a cofactor.

It catalyses the reaction succinate + ATP + CoA = succinyl-CoA + ADP + phosphate. The catalysed reaction is GTP + succinate + CoA = succinyl-CoA + GDP + phosphate. It functions in the pathway carbohydrate metabolism; tricarboxylic acid cycle; succinate from succinyl-CoA (ligase route): step 1/1. Its function is as follows. Succinyl-CoA synthetase functions in the citric acid cycle (TCA), coupling the hydrolysis of succinyl-CoA to the synthesis of either ATP or GTP and thus represents the only step of substrate-level phosphorylation in the TCA. The beta subunit provides nucleotide specificity of the enzyme and binds the substrate succinate, while the binding sites for coenzyme A and phosphate are found in the alpha subunit. The sequence is that of Succinate--CoA ligase [ADP-forming] subunit beta from Ruthia magnifica subsp. Calyptogena magnifica.